The chain runs to 237 residues: DPDMIFEIKDAVSIPVMAKARIGHFVEAQVLESIGVDMIDESEVLTPADEINHINKKAFTAPFVCGARNLGEALRRIDEGAAMIRTKGEAGTGNVVEAVKHMRAVNEGIARVVGYHEMGLEAELVQMARNELKVPMEIILEVAKLKRLPVVNFAAGGIATPADAALMMQMGCDGVFVGSGIFKSGNPEIRAKAIVEATYNFDKPELIGEVSKNLGEAMVGINIDQIPEEMLLAKRGI.

Lys19 serves as the catalytic Schiff-base intermediate with D-ribose 5-phosphate. Gly91 serves as a coordination point for D-ribose 5-phosphate. Arg103 is a D-glyceraldehyde 3-phosphate binding site. D-ribose 5-phosphate is bound by residues Gly157 and 178-179 (GS).

This sequence belongs to the PdxS/SNZ family. In terms of assembly, in the presence of PdxT, forms a dodecamer of heterodimers.

The enzyme catalyses aldehydo-D-ribose 5-phosphate + D-glyceraldehyde 3-phosphate + L-glutamine = pyridoxal 5'-phosphate + L-glutamate + phosphate + 3 H2O + H(+). Its pathway is cofactor biosynthesis; pyridoxal 5'-phosphate biosynthesis. Functionally, catalyzes the formation of pyridoxal 5'-phosphate from ribose 5-phosphate (RBP), glyceraldehyde 3-phosphate (G3P) and ammonia. The ammonia is provided by the PdxT subunit. Can also use ribulose 5-phosphate and dihydroxyacetone phosphate as substrates, resulting from enzyme-catalyzed isomerization of RBP and G3P, respectively. The protein is Pyridoxal 5'-phosphate synthase subunit PdxS of Methanococcus vannielii.